A 483-amino-acid chain; its full sequence is AP-3 complex subunit mu (483 aa).

Residues 211 to 482 (NNELYVDLLE…KTQTGNFQVR (272 aa)) enclose the MHD domain.

The protein belongs to the adaptor complexes medium subunit family. In terms of assembly, adaptor protein complex 3 (AP-3) is a heterotetramer composed of 2 large adaptins (APL5 and APL6), a medium adaptin (APM3) and a small adaptin (APS3).

The protein resides in the golgi apparatus. It localises to the cytoplasmic vesicle membrane. Functionally, part of the AP-3 complex, an adaptor-related complex which is not clathrin-associated. The complex is associated with the Golgi region as well as more peripheral structures. It facilitates the budding of vesicles from the Golgi membrane and may be directly involved in trafficking to the vacuole. Required for the transport via the ALP pathway, which directs the transport of the cargo proteins PHO8 and VAM3 to the vacuole. The sequence is that of AP-3 complex subunit mu (APM3) from Saccharomyces cerevisiae (strain ATCC 204508 / S288c) (Baker's yeast).